The sequence spans 392 residues: BURP domain protein RD22 (392 aa).

Residues 1–22 (MAIRLPLICLLGSFMVVAIAAD) form the signal peptide. TXV repeat units follow at residues 56-58 (TNV), 78-80 (TAV), 100-102 (THV), and 125-127 (TDV). The interval 57–164 (NVQVGKGGVN…PFVYNYAAKE (108 aa)) is 5 X approximate repeats. The interval 61–136 (GKGGVNVNTH…VGVGKGGVTV (76 aa)) is disordered. Gly residues predominate over residues 94–114 (GKPGGGTHVSVGSGKGHGGGV). One can recognise a BURP domain in the interval 176 to 392 (FFLEKDLVRG…PETHVVWFSY (217 aa)).

In terms of tissue distribution, expressed in seed. Highest expression in leaves and guard cells.

Functionally, acts to suppress chlorophyll degradation under moisture stress. The chain is BURP domain protein RD22 from Arabidopsis thaliana (Mouse-ear cress).